We begin with the raw amino-acid sequence, 211 residues long: FMN-dependent NADH:quinone oxidoreductase (211 aa).

17–19 (SYS) is an FMN binding site.

This sequence belongs to the azoreductase type 1 family. As to quaternary structure, homodimer. It depends on FMN as a cofactor.

It catalyses the reaction 2 a quinone + NADH + H(+) = 2 a 1,4-benzosemiquinone + NAD(+). It carries out the reaction N,N-dimethyl-1,4-phenylenediamine + anthranilate + 2 NAD(+) = 2-(4-dimethylaminophenyl)diazenylbenzoate + 2 NADH + 2 H(+). Functionally, quinone reductase that provides resistance to thiol-specific stress caused by electrophilic quinones. Its function is as follows. Also exhibits azoreductase activity. Catalyzes the reductive cleavage of the azo bond in aromatic azo compounds to the corresponding amines. In Bacillus pumilus (strain SAFR-032), this protein is FMN-dependent NADH:quinone oxidoreductase.